We begin with the raw amino-acid sequence, 487 residues long: N-succinylglutamate 5-semialdehyde dehydrogenase (487 aa).

Glycine 221–glycine 226 serves as a coordination point for NAD(+). Active-site residues include glutamate 244 and cysteine 278.

Belongs to the aldehyde dehydrogenase family. AstD subfamily.

The enzyme catalyses N-succinyl-L-glutamate 5-semialdehyde + NAD(+) + H2O = N-succinyl-L-glutamate + NADH + 2 H(+). It participates in amino-acid degradation; L-arginine degradation via AST pathway; L-glutamate and succinate from L-arginine: step 4/5. Its function is as follows. Catalyzes the NAD-dependent reduction of succinylglutamate semialdehyde into succinylglutamate. The sequence is that of N-succinylglutamate 5-semialdehyde dehydrogenase from Burkholderia mallei (strain ATCC 23344).